The chain runs to 310 residues: Probable cell division protein WhiA (310 aa).

The segment at residues 277-310 is a DNA-binding region (H-T-H motif); that stretch reads SLKELAEQVPDGPISKSGVNHRLKKLHEIAENLR.

This sequence belongs to the WhiA family.

Its function is as follows. Involved in cell division and chromosome segregation. This is Probable cell division protein WhiA from Lactobacillus delbrueckii subsp. bulgaricus (strain ATCC BAA-365 / Lb-18).